We begin with the raw amino-acid sequence, 182 residues long: Autophagy-related protein 31 (182 aa).

Residues 105–134 (LTSGNDTGGDAGKKSGDISDPAAGPDVPRE) are disordered.

It is found in the cytoplasm. It localises to the cytoskeleton. The protein localises to the preautophagosomal structure. In terms of biological role, plays a role in starvation-induced autophagy. Involved in mitophagy. Functions with ATG17 and ATG29 at the preautophagosomal structure (PAS) in order to form normal autophagosomes under starvation conditions. May be involved in microtubule function, such as chromosome segregation and karyogamy. The polypeptide is Autophagy-related protein 31 (CIS1) (Candida glabrata (strain ATCC 2001 / BCRC 20586 / JCM 3761 / NBRC 0622 / NRRL Y-65 / CBS 138) (Yeast)).